A 186-amino-acid chain; its full sequence is MKFFLGSALFLILTFINLVRAEFEFITPAEDSRWARGFTYAVKWKQPTEQFVEIALQYADSNNTLITSSGVIPSNQTYWMVKIDKKWLMKMDNITARVVAVPQNGTASTVYVGPQVLLANTFYWKMVVDVSPAFSVNPIDKKLAIGLSVGLSCCILIVLFLHFATRRERRILKNEKELEMSSYRKH.

An N-terminal signal peptide occupies residues 1–21 (MKFFLGSALFLILTFINLVRA). At 22–142 (EFEFITPAED…AFSVNPIDKK (121 aa)) the chain is on the extracellular side. N-linked (GlcNAc...) asparagine glycosylation is found at Asn-62, Asn-75, Asn-93, and Asn-104. A helical transmembrane segment spans residues 143-163 (LAIGLSVGLSCCILIVLFLHF). Topologically, residues 164-186 (ATRRERRILKNEKELEMSSYRKH) are cytoplasmic.

The protein resides in the membrane. This is an uncharacterized protein from Schizosaccharomyces pombe (strain 972 / ATCC 24843) (Fission yeast).